The chain runs to 380 residues: uncharacterized protein (380 aa).

2 consecutive HTH tetR-type domains span residues 3–63 and 201–262; these read ESAE…KEGL and VRTR…CAEI. The segment at residues 225-244 is a DNA-binding region (H-T-H motif); the sequence is TISDITRKSNIRRATFYDHY.

This is an uncharacterized protein from Bacillus subtilis (strain 168).